A 387-amino-acid chain; its full sequence is Mannitol-1-phosphate 5-dehydrogenase (387 aa).

An NAD(+)-binding site is contributed by 3-14 (ALHFGAGNIGRG).

The protein belongs to the mannitol dehydrogenase family.

It catalyses the reaction D-mannitol 1-phosphate + NAD(+) = beta-D-fructose 6-phosphate + NADH + H(+). The chain is Mannitol-1-phosphate 5-dehydrogenase from Yersinia pseudotuberculosis serotype IB (strain PB1/+).